The chain runs to 178 residues: uncharacterized protein (178 aa).

Positions Met1–Ala20 are cleaved as a signal peptide.

This is an uncharacterized protein from Archaeoglobus fulgidus (strain ATCC 49558 / DSM 4304 / JCM 9628 / NBRC 100126 / VC-16).